We begin with the raw amino-acid sequence, 782 residues long: cGMP-specific 3',5'-cyclic phosphodiesterase gamma (782 aa).

Topologically, residues 1 to 69 (MKHMFKNILF…LCDNMYSKKY (69 aa)) are cytoplasmic. Residues 70 to 90 (VILVSHLISLLLMYSVCLIVG) form a helical membrane-spanning segment. The Extracellular segment spans residues 91–97 (NINDLFS). The chain crosses the membrane as a helical span at residues 98-118 (VLKLTYILLHTFTAINIILIL). Over 119 to 135 (TLHATHYVEMFKSIKGE) the chain is Cytoplasmic. The chain crosses the membrane as a helical span at residues 136-156 (IFIFYIMMIFVIWCSWLFILF). The Extracellular segment spans residues 157-181 (NNIKDLLPIVVNVNNFLYATYANNK). Residues 182–202 (INIVLGFFAYLPIFYLITIIP) form a helical membrane-spanning segment. Residues 203 to 208 (CRICYS) lie on the Cytoplasmic side of the membrane. The helical transmembrane segment at 209–229 (CAFDILFFIMKVAIFSVYYLI) threads the bilayer. Residues 230–239 (TMKSYILTDN) are Extracellular-facing. Residues 240–260 (IFMIISALVGSLFIFVIRYII) traverse the membrane as a helical segment. Topologically, residues 261 to 782 (EIQRRLSFHN…YAPNLNIYKL (522 aa)) are cytoplasmic. The tract at residues 376-396 (GSKEEPEAESESECVDESKEG) is disordered. A compositionally biased stretch (acidic residues) spans 381-390 (PEAESESECV). Residues 423–751 (YEEKENEILK…SKWTKIEKDE (329 aa)) form the PDEase domain. His504 acts as the Proton donor in catalysis. 504–508 (HNSIH) provides a ligand contact to a nucleoside 3',5'-cyclic phosphate. 4 residues coordinate a divalent metal cation: His508, His544, Asp545, and Asp654. Positions 545, 654, and 706 each coordinate a nucleoside 3',5'-cyclic phosphate.

This sequence belongs to the cyclic nucleotide phosphodiesterase family. It depends on a divalent metal cation as a cofactor.

It is found in the membrane. It localises to the endoplasmic reticulum membrane. The enzyme catalyses 3',5'-cyclic GMP + H2O = GMP + H(+). The protein operates within purine metabolism; 3',5'-cyclic GMP degradation; GMP from 3',5'-cyclic GMP: step 1/1. Specifically hydrolyzes the second messenger cGMP, which is a key regulator of many important physiological processes. Probably by regulating cGMP levels, required for sporozoite motility and invasion of the mosquito salivary glands. The polypeptide is cGMP-specific 3',5'-cyclic phosphodiesterase gamma (Plasmodium yoelii).